A 142-amino-acid polypeptide reads, in one-letter code: uncharacterized protein (142 aa).

Residues 1–120 (MADKFDANDE…TILKWEKNMD (120 aa)) enclose the N-acetyltransferase domain.

This sequence belongs to the acetyltransferase family.

This is an uncharacterized protein from Streptococcus pyogenes serotype M1.